Consider the following 158-residue polypeptide: uncharacterized protein (158 aa).

In terms of biological role, the presence of the two linear plasmids, termed pGKL1 and pGKL2, in strains of Kluyveromyces lactis confers the killer phenotype to the host cell, by promoting the secretion of a toxin able to inhibit the growth of sensitive strains. This is an uncharacterized protein from Kluyveromyces lactis (strain ATCC 8585 / CBS 2359 / DSM 70799 / NBRC 1267 / NRRL Y-1140 / WM37) (Yeast).